The chain runs to 323 residues: Aldo-keto reductase family 1 member C3 (323 aa).

NADP(+) is bound by residues 23–24 (TY) and Asp-50. The active-site Proton donor is the Tyr-55. Residue His-117 coordinates substrate. Residues 166–167 (SN), Gln-190, 216–222 (YSALGSQ), 270–272 (KSY), and 276–280 (RIRQN) each bind NADP(+).

This sequence belongs to the aldo/keto reductase family. As to expression, expressed in many tissues including adrenal gland, brain, kidney, liver, lung, mammary gland, placenta, small intestine, colon, spleen, prostate and testis. High expression in prostate and mammary gland. In the prostate, higher levels in epithelial cells than in stromal cells. In the brain, expressed in medulla, spinal cord, frontotemporal lobes, thalamus, subthalamic nuclei and amygdala. Weaker expression in the hippocampus, substantia nigra and caudate.

It is found in the cytoplasm. It catalyses the reaction a 3alpha-hydroxysteroid + NADP(+) = a 3-oxosteroid + NADPH + H(+). It carries out the reaction a 3alpha-hydroxysteroid + NAD(+) = a 3-oxosteroid + NADH + H(+). The catalysed reaction is prostaglandin F2alpha + NADP(+) = prostaglandin D2 + NADPH + H(+). The enzyme catalyses prostaglandin F2alpha + NADP(+) = prostaglandin H2 + NADPH + H(+). It catalyses the reaction prostaglandin D2 + NADPH + H(+) = 11beta-prostaglandin F2 + NADP(+). It carries out the reaction prostaglandin D2-ethanolamide + NADPH + H(+) = 11beta-prostaglandin F2-ethanolamide + NADP(+). The catalysed reaction is testosterone + NAD(+) = androst-4-ene-3,17-dione + NADH + H(+). The enzyme catalyses testosterone + NADP(+) = androst-4-ene-3,17-dione + NADPH + H(+). It catalyses the reaction 17beta-estradiol + NADP(+) = estrone + NADPH + H(+). It carries out the reaction 17beta-estradiol + NAD(+) = estrone + NADH + H(+). The catalysed reaction is (20S)-hydroxypregn-4-en-3-one + NADP(+) = progesterone + NADPH + H(+). The enzyme catalyses (20S)-hydroxypregn-4-en-3-one + NAD(+) = progesterone + NADH + H(+). It catalyses the reaction 5alpha-androstane-3alpha,17beta-diol + NADP(+) = 17beta-hydroxy-5alpha-androstan-3-one + NADPH + H(+). It carries out the reaction 5alpha-androstane-3alpha,17beta-diol + NAD(+) = 17beta-hydroxy-5alpha-androstan-3-one + NADH + H(+). The catalysed reaction is androsterone + NADPH + H(+) = 5alpha-androstane-3alpha,17beta-diol + NADP(+). The enzyme catalyses 5alpha-androstane-3alpha,17beta-diol + NAD(+) = androsterone + NADH + H(+). It catalyses the reaction 5alpha-androstane-3beta,17beta-diol + NADP(+) = 17beta-hydroxy-5alpha-androstan-3-one + NADPH + H(+). It carries out the reaction 9-cis-retinol + NADP(+) = 9-cis-retinal + NADPH + H(+). The protein operates within steroid metabolism. Strongly inhibited by nonsteroidal anti-inflammatory drugs (NSAID) including flufenamic acid and indomethacin. Also inhibited by the flavinoid, rutin, and by selective serotonin inhibitors (SSRIs). The oxidation reaction is inhibited by low micromolar concentrations of NADPH. In terms of biological role, cytosolic aldo-keto reductase that catalyzes the NADH and NADPH-dependent reduction of ketosteroids to hydroxysteroids. Acts as a NAD(P)(H)-dependent 3-, 17- and 20-ketosteroid reductase on the steroid nucleus and side chain and regulates the metabolism of androgens, estrogens and progesterone. Displays the ability to catalyze both oxidation and reduction in vitro, but most probably acts as a reductase in vivo since the oxidase activity measured in vitro is inhibited by physiological concentration of NADPH. Acts preferentially as a 17-ketosteroid reductase and has the highest catalytic efficiency of the AKR1C enzyme for the reduction of delta4-androstenedione to form testosterone. Reduces prostaglandin (PG) D2 to 11beta-prostaglandin F2, progesterone to 20alpha-hydroxyprogesterone and estrone to 17beta-estradiol. Catalyzes the transformation of the potent androgen dihydrotestosterone (DHT) into the less active form, 5-alpha-androstan-3-alpha,17-beta-diol (3-alpha-diol). Also displays retinaldehyde reductase activity toward 9-cis-retinal. This chain is Aldo-keto reductase family 1 member C3 (AKR1C3), found in Homo sapiens (Human).